Here is a 923-residue protein sequence, read N- to C-terminus: MTIPNSDFMLENGVCDLPFTPEEEKRIVSELTSESEDNLKQGNLYFVISKRWYTSWQEYVENSANECSTGESSEAPRPGPIDNHDIIESDSDINDPQLRRLLVEGEDYVLVPKQVWKRLVEWYSGGPPIERKLICQGFYTRSYSVEVYPLCLMLTDGRDESRTVIRLGKQASIRELYEKVCAMTGVPQEKAHIWDYFDKRKNGLLDPLSYKSLEESSLHMDQDILVEVDGLSSSSQSAMSSTGNELALVPLEPSRSIVTIAGGPTLSNGHSTTSNFSLFPRITSEDDGRDSLSILGKGEKGGLAGLSNLGNTCFMNSALQCLAHTPPIVEYFLQDYSDDINRDNPLGMCGELAIAFGDLLKKLWSSGRNAVAPRAFKTKLARFAPQFSGYNQHDSQELLAFLLDGLHEDLNKVKRKPYIELKDSDSRPDDEVAEELWNYHKARNDSVIVDVCQGQYKSTLVCPVCGKISITFDPFMYLSVPLPSTLTRSMTITVFYCDGSRLPMPYTVIVPKQGSIRDLITALGTACCLAEDESLLLAEVYDHKIFRYFEIPLDSLSAIKDDEHIVAYRLNQIPKGSRKAKLEILHGGQERAVLDSVRGSDVKLFGTPFVTYVNTEPLSGTDIDAVISGFLSPLHKVHAPSKIHNGSDNGHLADATVDQASGILSSPDTEIDNASDRELSFRIFLTDERGLNIKPLQSESSISPGTVTRVLVEWNEGEHERYDSSYLSDLPEVHKTSFSAKKTRQESISLFSCLEAFLAEEPLGPDDMWFCPSCKEHRQANKKLDLWKLPDILVFHLKRFTYSRYLKNKIDTFVNFPVHDLDLSKYVKNKNGQSYLYELYAVSNHYGGLGGGHYTAYAKLIDDNKWYHFDDSHVSSVNESEIRNSAAYVLFYRRVRSETETQTAEMSTDMDYSCLNSHNDKAS.

Residues 19–134 form the DUSP domain; it reads FTPEEEKRIV…GGPPIERKLI (116 aa). The segment at 65–91 is disordered; it reads NECSTGESSEAPRPGPIDNHDIIESDS. In terms of domain architecture, USP spans 304-895; it reads AGLSNLGNTC…AAYVLFYRRV (592 aa). The active-site Nucleophile is Cys-313. His-853 (proton acceptor) is an active-site residue.

It belongs to the peptidase C19 family.

The enzyme catalyses Thiol-dependent hydrolysis of ester, thioester, amide, peptide and isopeptide bonds formed by the C-terminal Gly of ubiquitin (a 76-residue protein attached to proteins as an intracellular targeting signal).. In terms of biological role, recognizes and hydrolyzes the peptide bond at the C-terminal Gly of ubiquitin. Involved in the processing of poly-ubiquitin precursors as well as that of ubiquitinated proteins. This Arabidopsis thaliana (Mouse-ear cress) protein is Ubiquitin carboxyl-terminal hydrolase 10 (UBP10).